We begin with the raw amino-acid sequence, 463 residues long: Cysteine--tRNA ligase (463 aa).

C33 lines the Zn(2+) pocket. Residues 35 to 45 (PTVYDFAHIGN) carry the 'HIGH' region motif. Zn(2+) contacts are provided by C221, H246, and E250. Residues 279 to 283 (KMSKS) carry the 'KMSKS' region motif. K282 provides a ligand contact to ATP.

Belongs to the class-I aminoacyl-tRNA synthetase family. In terms of assembly, monomer. It depends on Zn(2+) as a cofactor.

The protein resides in the cytoplasm. It catalyses the reaction tRNA(Cys) + L-cysteine + ATP = L-cysteinyl-tRNA(Cys) + AMP + diphosphate. The sequence is that of Cysteine--tRNA ligase from Rhizobium rhizogenes (strain K84 / ATCC BAA-868) (Agrobacterium radiobacter).